Here is a 2472-residue protein sequence, read N- to C-terminus: Nuclear receptor corepressor 2 (2472 aa).

Disordered regions lie at residues 1–20 (MSGSTQPVAQTWRAAEPRYP), 47–168 (RDYT…SRLS), and 190–220 (ISKLKKKQQQLEEEAAKPPEPEKPVSPPPIE). R18 carries the post-translational modification Asymmetric dimethylarginine. Residues 51–60 (SHLSPGSIIQ) are compositionally biased toward polar residues. S54 and S67 each carry phosphoserine. Basic and acidic residues-rich tracts occupy residues 78–88 (RSQELHLRPES) and 96–112 (GKPDIEFTESKRPRLEL). Phosphoserine occurs at positions 149 and 152. Positions 165–207 (SRLSKEELIQNMDRVDREITMVEQQISKLKKKQQQLEEEAAKP) form a coiled coil. A compositionally biased stretch (basic and acidic residues) spans 203 to 212 (EAAKPPEPEK). S215 is subject to Phosphoserine. The segment at 254–312 (LPLYNQPSDTRQYHENIKINQAMRKKLILYFKRRNHARKQWEQRFCQRYDQLMEAWEKK) is interaction with SIN3A/B. Positions 389–480 (MRQLAVIPPM…YLTKKNENYK (92 aa)) are deacetylase activation domain (DAD). An SANT 1 domain is found at 427–478 (QVTNMWSEQERDTFREKFMQHPKNFGLIASFLERKTVAECVLYYYLTKKNEN). 3 residues coordinate 1D-myo-inositol 1,4,5,6-tetrakisphosphate: K449, Y470, and Y471. Disordered stretches follow at residues 487–618 (YRRR…EMET), 665–1107 (HKLK…RPPI), and 1173–1197 (SATSGSITKGLPSTRAADGPSYRGS). Residues 492–560 (KSQQQQQQQQ…GEDNDEKEAV (69 aa)) adopt a coiled-coil conformation. The residue at position 493 (S493) is a Phosphoserine. The span at 494–507 (QQQQQQQQQQQQQQ) shows a compositional bias: low complexity. Positions 512–548 (SQEEKEEKEKEKEADKEEEKQDAENEKEELSKEKTDD) are enriched in basic and acidic residues. T549 carries the phosphothreonine modification. A Phosphoserine modification is found at S550. The span at 592–609 (ATPQQSSELASMEMNESS) shows a compositional bias: polar residues. Residues 606–657 (NESSRWTEEEMETAKKGLLEHGRNWSAIARMVGSKTVSQCKNFYFNYKKRQN) form the SANT 2 domain. Residues 658 to 682 (LDEILQQHKLKMEKERNARRKKKKT) adopt a coiled-coil conformation. The span at 709–718 (NEEELAEEAE) shows a compositional bias: acidic residues. Residues 739–750 (VNNSSDTESVPS) show a composition bias toward polar residues. 2 positions are modified to phosphoserine: S747 and S750. Pro residues-rich tracts occupy residues 773 to 782 (TQPPVPPPEE) and 789 to 811 (EPSPVPDASGPPSPEPSPSPAAP). 2 stretches are compositionally biased toward basic and acidic residues: residues 831 to 850 (EDAKEQKSEAEEIDVGKPEE) and 859 to 868 (ESVKSDHKEE). At K878 the chain carries N6-acetyllysine. Low complexity predominate over residues 905–919 (GSSSGATQDSDSSAT). S938 is subject to Phosphoserine. The residue at position 945 (T945) is a Phosphothreonine. S955 bears the Phosphoserine mark. Residue K958 is modified to N6-acetyllysine. Residues 978–988 (KVHEPPREDTV) are compositionally biased toward basic and acidic residues. Residues 989–1000 (PPKPVPPVPPPT) are compositionally biased toward pro residues. Low complexity predominate over residues 1090-1101 (LPLGLHDSARPV). 2 positions are modified to N6-acetyllysine: K1181 and K1209. S1220 is subject to Phosphoserine. 3 disordered regions span residues 1254–1277 (SVSQCSKEDGRSSSGPPHETAAPK), 1345–1378 (LKREGTPPPPPPPRDLTETYKPRPLDPLGPLKLK), and 1410–1443 (PLAPRPLKEGSITQGTPLKYDSGAPSTGTKKHDV). A Phosphothreonine modification is found at T1350. Residues 1359–1368 (DLTETYKPRP) are compositionally biased toward basic and acidic residues. A phosphoserine mark is found at S1449, S1509, and S1565. The segment at 1479-1578 (KSRSGTSSGA…TVPEHHPHPI (100 aa)) is disordered. The residue at position 1624 (R1624) is an Asymmetric dimethylarginine. Positions 1734 to 1826 (TAPPPFSSRH…PISPRTQDAL (93 aa)) are disordered. The span at 1740–1753 (SSRHSSSPLSPGGP) shows a compositional bias: low complexity. Phosphoserine is present on residues S1746 and S1749. The segment covering 1765-1778 (SERERERERERDKS) has biased composition (basic and acidic residues). Positions 1807–1826 (RPASHTHQHSPISPRTQDAL) are enriched in polar residues. S1819 carries the phosphoserine modification. At R1854 the chain carries Omega-N-methylarginine. Disordered regions lie at residues 1857 to 1878 (RSTSTSSPVRPAATFPPATHCP), 1898 to 1986 (KETS…KPFS), and 2001 to 2078 (AGYS…LQTA). Over residues 1899-1913 (ETSRVARPERPRVDA) the composition is skewed to basic and acidic residues. At K1920 the chain carries N6-acetyllysine. A compositionally biased stretch (low complexity) spans 1925–1938 (EPASSPSKSSEPRS). S1963 is modified (phosphoserine). At K1983 the chain carries N6-acetyllysine. 5 positions are modified to phosphoserine: S2004, S2012, S2015, S2016, and S2018. Position 2020 is a phosphothreonine (T2020). Basic and acidic residues predominate over residues 2020–2043 (THDKGLSKPLEELEKSHLEGELRH). At S2035 the chain carries Phosphoserine. A compositionally biased stretch (low complexity) spans 2064 to 2075 (LPESQPSSSPLL). Positions 2086-2090 (RVVTL) are required for interaction with RARA in the absence of its ligand. Positions 2094 to 2098 (ISEVI) match the CORNR box of ID1 motif. The tract at residues 2132–2226 (RRPPSDLYLP…GNTSQPPAFF (95 aa)) is disordered. S2161, S2181, and S2215 each carry phosphoserine. The CORNR box of ID2 motif lies at 2296–2300 (LEAII). The segment at 2343 to 2459 (GRSDHALTSP…HHAWDEEPKP (117 aa)) is disordered. At S2371 the chain carries Phosphoserine. Over residues 2439–2450 (LAAGSGPLAGPH) the composition is skewed to low complexity.

It belongs to the N-CoR nuclear receptor corepressors family. In terms of assembly, forms a large corepressor complex that contains SIN3A/B and histone deacetylases HDAC1 and HDAC2. This complex associates with the thyroid (TR) and the retinoid acid receptors (RAR) in the absence of ligand, and may stabilize their interaction with TFIIB. Interacts directly with RARA in the absence of ligand; the interaction represses RARA activity. Interacts (isoform SMRT) with HDAC10. Interacts with MINT. Component of the N-Cor repressor complex, at least composed of NCOR1, NCOR2, HDAC3, TBL1X, TBL1R, CORO2A and GPS2. Interacts with CBFA2T3 and ATXN1L. Interacts with RARB; the interaction is weak and does not repress RARB transactivational activity. Interacts (via 1D-myo-inositol 1,4,5,6-tetrakisphosphate) with HDAC3; promoting the histone deacetylase activity of HDAC3. Interacts with HDAC7 and C1D. Interacts with NR4A2; this interaction increases in the absence of PITX3. Interacts with BCL6 (via the BTB domain), required for BCL6 transcriptional repressor activity on a subset of target genes. Forms ternary complexes with BCOR and BCL6 on target gene promoters but, on enhancer elements, interacts with BCL6 and HDAC3 to repress proximal gene expression. May interact with DEAF1. Interacts with RXRA. Interacts with MECP2. Interacts with ZBTB7A. Interacts with AR. Interacts with TBL1Y. Interacts with SANBR (via the BTB domain). As to expression, ubiquitous. Also widely expressed in early embryos.

It is found in the nucleus. Its function is as follows. Transcriptional corepressor that mediates the transcriptional repression activity of some nuclear receptors by promoting chromatin condensation, thus preventing access of the basal transcription. Acts by recruiting chromatin modifiers, such as histone deacetylases HDAC1, HDAC2 and HDAC3. Required to activate the histone deacetylase activity of HDAC3. Involved in the regulation BCL6-dependent of the germinal center (GC) reactions, mainly through the control of the GC B-cells proliferation and survival. Recruited by ZBTB7A to the androgen response elements/ARE on target genes, negatively regulates androgen receptor signaling and androgen-induced cell proliferation. The polypeptide is Nuclear receptor corepressor 2 (Ncor2) (Mus musculus (Mouse)).